Reading from the N-terminus, the 344-residue chain is Ferrochelatase (344 aa).

Positions 191 and 271 each coordinate Fe cation.

This sequence belongs to the ferrochelatase family.

It localises to the cytoplasm. The enzyme catalyses heme b + 2 H(+) = protoporphyrin IX + Fe(2+). Its pathway is porphyrin-containing compound metabolism; protoheme biosynthesis; protoheme from protoporphyrin-IX: step 1/1. Catalyzes the ferrous insertion into protoporphyrin IX. The protein is Ferrochelatase of Pelagibacter ubique (strain HTCC1062).